We begin with the raw amino-acid sequence, 502 residues long: Probable cytochrome P450 514A4 (502 aa).

The chain crosses the membrane as a helical span at residues 4 to 24 (IFTIILTITILVLSLILKDLL). Cys448 contributes to the heme binding site.

Belongs to the cytochrome P450 family. The cofactor is heme.

It localises to the membrane. The sequence is that of Probable cytochrome P450 514A4 (cyp514A4) from Dictyostelium discoideum (Social amoeba).